A 110-amino-acid chain; its full sequence is Large ribosomal subunit protein uL24 (110 aa).

The protein belongs to the universal ribosomal protein uL24 family. As to quaternary structure, part of the 50S ribosomal subunit.

Its function is as follows. One of two assembly initiator proteins, it binds directly to the 5'-end of the 23S rRNA, where it nucleates assembly of the 50S subunit. In terms of biological role, one of the proteins that surrounds the polypeptide exit tunnel on the outside of the subunit. This Roseiflexus castenholzii (strain DSM 13941 / HLO8) protein is Large ribosomal subunit protein uL24.